Here is a 320-residue protein sequence, read N- to C-terminus: Olfactory receptor 52N1 (320 aa).

The Extracellular portion of the chain corresponds to 1–27 (MSFLNGTSLTPASFILNGIPGLEDVHL). N-linked (GlcNAc...) asparagine glycosylation is present at asparagine 5. A helical transmembrane segment spans residues 28–48 (WISFPLCTMYSIAITGNFGLM). Topologically, residues 49–56 (YLIYCDEA) are cytoplasmic. A helical membrane pass occupies residues 57 to 77 (LHRPMYVFLALLSFTDVLMCT). Topologically, residues 78–101 (STLPNTLFILWFNLKEIDFKACLA) are extracellular. The cysteines at positions 99 and 191 are disulfide-linked. Residues 102 to 122 (QMFFVHTFTGMESGVLMLMAL) traverse the membrane as a helical segment. The Cytoplasmic portion of the chain corresponds to 123–141 (DHCVAICFPLRYATILTNS). A helical membrane pass occupies residues 142–162 (VIAKAGFLTFLRGVMLVIPST). Residues 163–198 (FLTKRLPYCKGNVIPHTYCDHMSVAKISCGNVRVNA) lie on the Extracellular side of the membrane. The helical transmembrane segment at 199-219 (IYGLIVALLIGGFDILCITIS) threads the bilayer. Residues 220–239 (YTMILQAVVSLSSADARQKA) are Cytoplasmic-facing. The chain crosses the membrane as a helical span at residues 240-260 (FSTCTAHFCAIVLTYVPAFFT). Topologically, residues 261–276 (FFTHHFGGHTIPLHIH) are extracellular. The helical transmembrane segment at 277–297 (IIMANLYLLMPPTMNPIVYGV) threads the bilayer. Residues 298–320 (KTRQVRESVIRFFLKGKDNSHNF) are Cytoplasmic-facing.

It belongs to the G-protein coupled receptor 1 family.

Its subcellular location is the cell membrane. In terms of biological role, odorant receptor. The chain is Olfactory receptor 52N1 (OR52N1) from Homo sapiens (Human).